A 202-amino-acid chain; its full sequence is Transmembrane protein 223 (202 aa).

The Mitochondrial matrix segment spans residues 1–43 (MAAPGRRWSVLLFRALQSLSARRALHDTAPPRDVLLFEHERGR). A helical transmembrane segment spans residues 44–64 (FFAVLGLFCAGQGVFWASLAI). The Mitochondrial intermembrane portion of the chain corresponds to 65–97 (ASLARPPTPVRPTDAKTPDHGGLDLRSTLWRYG). The helical transmembrane segment at 98–118 (LAVGCGAIGSLVLGAGLLFSL) threads the bilayer. Residues 119–202 (RSVRSVMLRA…DNTVGAYRSL (84 aa)) lie on the Mitochondrial matrix side of the membrane.

This sequence belongs to the TMEM223 family. Associates with the mitochondrial ribosome.

The protein localises to the mitochondrion inner membrane. Its function is as follows. Mitochondrial ribosome-associated protein involved in the first steps of cytochrome c oxidase complex (complex IV) biogenesis. Stimulates the translation of MT-CO1 mRNA and is a constituent of early MT-CO1 assembly intermediates. In Bos taurus (Bovine), this protein is Transmembrane protein 223.